The sequence spans 264 residues: Proliferating cell nuclear antigen 2 (264 aa).

The DNA-binding element occupies 61-80 (RCDRNLSMGMNLGNMSKMLK).

The protein belongs to the PCNA family. Homo- and heterotrimer. Interacts with POLH, ATXR5 and ATXR6.

It is found in the nucleus. Functionally, this protein is an auxiliary protein of DNA polymerase delta and is involved in the control of eukaryotic DNA replication by increasing the polymerase's processibility during elongation of the leading strand. May be involved in UV resistance. This Arabidopsis thaliana (Mouse-ear cress) protein is Proliferating cell nuclear antigen 2 (PCNA2).